Reading from the N-terminus, the 769-residue chain is Elongation factor G, mitochondrial (769 aa).

The N-terminal 42 residues, 1 to 42 (MSKFLRGISSISSASLKARASNFGVFHGVCSARNLHQSRLCL), are a transit peptide targeting the mitochondrion. A tr-type G domain is found at 74–356 (TRLRNIGVSA…AVVDYLPQPN (283 aa)). GTP is bound by residues 83–90 (AHIDSGKT), 154–158 (DTPGH), and 208–211 (NKMD).

Belongs to the TRAFAC class translation factor GTPase superfamily. Classic translation factor GTPase family. EF-G/EF-2 subfamily.

It is found in the mitochondrion. It functions in the pathway protein biosynthesis; polypeptide chain elongation. In terms of biological role, mitochondrial GTPase that catalyzes the GTP-dependent ribosomal translocation step during translation elongation. During this step, the ribosome changes from the pre-translocational (PRE) to the post-translocational (POST) state as the newly formed A-site-bound peptidyl-tRNA and P-site-bound deacylated tRNA move to the P and E sites, respectively. Catalyzes the coordinated movement of the two tRNA molecules, the mRNA and conformational changes in the ribosome. The chain is Elongation factor G, mitochondrial from Debaryomyces hansenii (strain ATCC 36239 / CBS 767 / BCRC 21394 / JCM 1990 / NBRC 0083 / IGC 2968) (Yeast).